Consider the following 371-residue polypeptide: Putative transport protein YtvI (371 aa).

9 helical membrane-spanning segments follow: residues 6–26 (ITIF…IAAA), 30–50 (FPLT…HPVV), 65–85 (VLGV…ILVA), 168–188 (FFAL…ATFF), 225–245 (GFIK…FIGL), 256–276 (IAFL…SVFV), 283–303 (SITG…VVLI), 312–332 (ILSK…FAGF), and 334–354 (LFGF…QAFI).

Belongs to the autoinducer-2 exporter (AI-2E) (TC 2.A.86) family.

The protein localises to the cell membrane. The polypeptide is Putative transport protein YtvI (ytvI) (Bacillus subtilis (strain 168)).